The sequence spans 310 residues: Methionyl-tRNA formyltransferase (310 aa).

Ser109–Pro112 contacts (6S)-5,6,7,8-tetrahydrofolate.

It belongs to the Fmt family.

The enzyme catalyses L-methionyl-tRNA(fMet) + (6R)-10-formyltetrahydrofolate = N-formyl-L-methionyl-tRNA(fMet) + (6S)-5,6,7,8-tetrahydrofolate + H(+). In terms of biological role, attaches a formyl group to the free amino group of methionyl-tRNA(fMet). The formyl group appears to play a dual role in the initiator identity of N-formylmethionyl-tRNA by promoting its recognition by IF2 and preventing the misappropriation of this tRNA by the elongation apparatus. The sequence is that of Methionyl-tRNA formyltransferase from Agathobacter rectalis (strain ATCC 33656 / DSM 3377 / JCM 17463 / KCTC 5835 / VPI 0990) (Eubacterium rectale).